A 500-amino-acid polypeptide reads, in one-letter code: Probable transcription factor FPSE_09189 (500 aa).

Disordered stretches follow at residues 161–197 (MVRH…PSLA) and 457–500 (IRTG…TQLE). Residues 459 to 474 (TGHEDSSRDGGRENKA) show a composition bias toward basic and acidic residues. The span at 475–484 (MNRNRSTGNS) shows a compositional bias: polar residues.

It is found in the nucleus. The two putative transcription factors FPSE_09188 and FPSE_09189 could be responsible for orchestrating expression of the W493 A and B biosynthesis cluster genes. W493 A and B consist of six amino acid residues D-allo-thr, L-Ala, D-Ala, L-Gln, D-Tyr, and L-Val/L-Ile linked to a 3-hydroxy-4-methyltetradecanoic acid polyketide chain. The sequence is that of Probable transcription factor FPSE_09189 from Fusarium pseudograminearum (strain CS3096) (Wheat and barley crown-rot fungus).